The primary structure comprises 233 residues: Phosphoribosylformylglycinamidine synthase subunit PurQ (233 aa).

The region spanning 3–233 (SAILVFPGIN…GLVEHLAKAA (231 aa)) is the Glutamine amidotransferase type-1 domain. The active-site Nucleophile is Cys-87. Active-site residues include His-204 and Glu-206.

Part of the FGAM synthase complex composed of 1 PurL, 1 PurQ and 2 PurS subunits.

The protein localises to the cytoplasm. The catalysed reaction is N(2)-formyl-N(1)-(5-phospho-beta-D-ribosyl)glycinamide + L-glutamine + ATP + H2O = 2-formamido-N(1)-(5-O-phospho-beta-D-ribosyl)acetamidine + L-glutamate + ADP + phosphate + H(+). It catalyses the reaction L-glutamine + H2O = L-glutamate + NH4(+). The protein operates within purine metabolism; IMP biosynthesis via de novo pathway; 5-amino-1-(5-phospho-D-ribosyl)imidazole from N(2)-formyl-N(1)-(5-phospho-D-ribosyl)glycinamide: step 1/2. Part of the phosphoribosylformylglycinamidine synthase complex involved in the purines biosynthetic pathway. Catalyzes the ATP-dependent conversion of formylglycinamide ribonucleotide (FGAR) and glutamine to yield formylglycinamidine ribonucleotide (FGAM) and glutamate. The FGAM synthase complex is composed of three subunits. PurQ produces an ammonia molecule by converting glutamine to glutamate. PurL transfers the ammonia molecule to FGAR to form FGAM in an ATP-dependent manner. PurS interacts with PurQ and PurL and is thought to assist in the transfer of the ammonia molecule from PurQ to PurL. This Rhodopseudomonas palustris (strain BisB18) protein is Phosphoribosylformylglycinamidine synthase subunit PurQ.